The chain runs to 55 residues: uncharacterized protein (55 aa).

This is an uncharacterized protein from Clostridium perfringens.